The chain runs to 83 residues: Mitochondrial import inner membrane translocase subunit Tim8 B (83 aa).

Position 2 is an N-acetylalanine (Ala-2). A Twin CX3C motif motif is present at residues 36–59; sequence CWDKCVEKPGSRLDSRTENCLSSC. Disulfide bonds link Cys-36/Cys-59 and Cys-40/Cys-55.

The protein belongs to the small Tim family. Heterohexamer; possibly composed of 3 copies of TIMM8B and 3 copies of TIMM13, named soluble 70 kDa complex. Associates with the TIM22 complex, whose core is composed of TIMM22.

The protein localises to the mitochondrion inner membrane. Its function is as follows. Probable mitochondrial intermembrane chaperone that participates in the import and insertion of some multi-pass transmembrane proteins into the mitochondrial inner membrane. Also required for the transfer of beta-barrel precursors from the TOM complex to the sorting and assembly machinery (SAM complex) of the outer membrane. Acts as a chaperone-like protein that protects the hydrophobic precursors from aggregation and guide them through the mitochondrial intermembrane space. This is Mitochondrial import inner membrane translocase subunit Tim8 B (Timm8b) from Mus musculus (Mouse).